The following is a 124-amino-acid chain: Aspartate 1-decarboxylase (124 aa).

The active-site Schiff-base intermediate with substrate; via pyruvic acid is Ser-25. Pyruvic acid (Ser) is present on Ser-25. Thr-57 is a binding site for substrate. Catalysis depends on Tyr-58, which acts as the Proton donor. 71-73 (GAA) is a binding site for substrate.

Belongs to the PanD family. Heterooctamer of four alpha and four beta subunits. Pyruvate serves as cofactor. Is synthesized initially as an inactive proenzyme, which is activated by self-cleavage at a specific serine bond to produce a beta-subunit with a hydroxyl group at its C-terminus and an alpha-subunit with a pyruvoyl group at its N-terminus.

The protein resides in the cytoplasm. The catalysed reaction is L-aspartate + H(+) = beta-alanine + CO2. It functions in the pathway cofactor biosynthesis; (R)-pantothenate biosynthesis; beta-alanine from L-aspartate: step 1/1. Functionally, catalyzes the pyruvoyl-dependent decarboxylation of aspartate to produce beta-alanine. This chain is Aspartate 1-decarboxylase, found in Bdellovibrio bacteriovorus (strain ATCC 15356 / DSM 50701 / NCIMB 9529 / HD100).